The chain runs to 79 residues: Acyl carrier protein (79 aa).

In terms of domain architecture, Carrier spans 2–77 (ESIEQRVKKI…QAVDYINSHG (76 aa)). At Ser-37 the chain carries O-(pantetheine 4'-phosphoryl)serine.

The protein belongs to the acyl carrier protein (ACP) family. In terms of processing, 4'-phosphopantetheine is transferred from CoA to a specific serine of apo-ACP by AcpS. This modification is essential for activity because fatty acids are bound in thioester linkage to the sulfhydryl of the prosthetic group.

The protein resides in the cytoplasm. Its pathway is lipid metabolism; fatty acid biosynthesis. Carrier of the growing fatty acid chain in fatty acid biosynthesis. In Bordetella parapertussis (strain 12822 / ATCC BAA-587 / NCTC 13253), this protein is Acyl carrier protein.